The following is a 313-amino-acid chain: Transcription initiation factor IIB 2 (313 aa).

The TFIIB-type zinc-finger motif lies at 13 to 44 (APKRCPECHSEHLIRDYEHGELICADCGAVIE). Zn(2+) contacts are provided by Cys17, Cys20, Cys36, and Cys39. Repeat copies occupy residues 130–213 (QLLN…AKEL) and 224–305 (SYIA…EISK).

This sequence belongs to the TFIIB family.

Its function is as follows. Stabilizes TBP binding to an archaeal box-A promoter. Also responsible for recruiting RNA polymerase II to the pre-initiation complex (DNA-TBP-TFIIB). The polypeptide is Transcription initiation factor IIB 2 (Thermoplasma volcanium (strain ATCC 51530 / DSM 4299 / JCM 9571 / NBRC 15438 / GSS1)).